Reading from the N-terminus, the 292-residue chain is Phosphatidylglycerol--prolipoprotein diacylglyceryl transferase (292 aa).

3 helical membrane-spanning segments follow: residues 18–38 (LFGVTFALRWYALAYIAGLLI), 67–87 (LLTWVILGVILGGRLGFVLFY), and 105–125 (GGMSFHGGFLGVMTALVAFCL). An a 1,2-diacyl-sn-glycero-3-phospho-(1'-sn-glycerol)-binding site is contributed by Arg-150. The next 3 helical transmembrane spans lie at 193–213 (QIYEAGLEGILLFAVLSLLVW), 222–242 (GSVSGMFLAGYGATRFLVEFV), and 266–286 (GLTMGQILSLPMILLGLYLIL).

It belongs to the Lgt family.

It localises to the cell inner membrane. It catalyses the reaction L-cysteinyl-[prolipoprotein] + a 1,2-diacyl-sn-glycero-3-phospho-(1'-sn-glycerol) = an S-1,2-diacyl-sn-glyceryl-L-cysteinyl-[prolipoprotein] + sn-glycerol 1-phosphate + H(+). Its pathway is protein modification; lipoprotein biosynthesis (diacylglyceryl transfer). Its function is as follows. Catalyzes the transfer of the diacylglyceryl group from phosphatidylglycerol to the sulfhydryl group of the N-terminal cysteine of a prolipoprotein, the first step in the formation of mature lipoproteins. The protein is Phosphatidylglycerol--prolipoprotein diacylglyceryl transferase of Cereibacter sphaeroides (strain ATCC 17029 / ATH 2.4.9) (Rhodobacter sphaeroides).